A 562-amino-acid polypeptide reads, in one-letter code: F-box and WD repeat domain-containing 11-A (562 aa).

The homodimerization domain D stretch occupies residues Gly-87–Gln-136. The region spanning Asp-149 to Leu-187 is the F-box domain. 7 WD repeats span residues Arg-256–Val-295, Leu-296–Thr-335, Leu-336–Leu-375, Leu-379–Thr-418, Leu-419–Val-458, Leu-459–Gln-491, and Leu-508–Asp-538.

As to quaternary structure, self-associates. Component of the SCF(FBXW11) complex.

The protein resides in the cytoplasm. The protein localises to the nucleus. The protein operates within protein modification; protein ubiquitination. Functionally, substrate recognition component of a SCF (SKP1-CUL1-F-box protein) E3 ubiquitin-protein ligase complex which mediates the ubiquitination and subsequent proteasomal degradation of target proteins. Probably recognizes and binds to phosphorylated target proteins: the interaction with substrates requires the phosphorylation of the two serine residues in the substrates' destruction motif D-S-G-X(2,3,4)-S. SCF(FBXW11) mediates the ubiquitination of phosphorylated CTNNB1 and participates in Wnt signaling regulation. Participates in Wnt signaling regulation, and plays a role in eye and jaw development. SCF(FBXW11) plays a key role in NF-kappa-B activation by mediating ubiquitination of phosphorylated NFKBIA, leading to its degradation by the proteasome, thereby allowing the associated NF-kappa-B complex to translocate into the nucleus and to activate transcription. This Danio rerio (Zebrafish) protein is F-box and WD repeat domain-containing 11-A.